The following is a 234-amino-acid chain: 1-(5-phosphoribosyl)-5-[(5-phosphoribosylamino)methylideneamino] imidazole-4-carboxamide isomerase (234 aa).

The active-site Proton acceptor is the D9. D131 serves as the catalytic Proton donor.

The protein belongs to the HisA/HisF family.

The protein localises to the cytoplasm. The catalysed reaction is 1-(5-phospho-beta-D-ribosyl)-5-[(5-phospho-beta-D-ribosylamino)methylideneamino]imidazole-4-carboxamide = 5-[(5-phospho-1-deoxy-D-ribulos-1-ylimino)methylamino]-1-(5-phospho-beta-D-ribosyl)imidazole-4-carboxamide. It participates in amino-acid biosynthesis; L-histidine biosynthesis; L-histidine from 5-phospho-alpha-D-ribose 1-diphosphate: step 4/9. The polypeptide is 1-(5-phosphoribosyl)-5-[(5-phosphoribosylamino)methylideneamino] imidazole-4-carboxamide isomerase (Staphylococcus saprophyticus subsp. saprophyticus (strain ATCC 15305 / DSM 20229 / NCIMB 8711 / NCTC 7292 / S-41)).